The chain runs to 287 residues: Cell division protein ZipA (287 aa).

Position 1 (methionine 1) is a topological domain, periplasmic. A helical membrane pass occupies residues 2–22 (EIGLREWLIVIGIIVIAGILF). The Cytoplasmic segment spans residues 23–287 (DGWRRMRGSK…ERRALTQRRG (265 aa)). Residues 48–140 (DEEETTSAEV…PTQRITEDKD (93 aa)) form a disordered region. Composition is skewed to basic and acidic residues over residues 64–77 (LDTH…EHDL), 85–104 (REGK…KDEP), and 121–140 (GRDD…EDKD).

Belongs to the ZipA family. Interacts with FtsZ via their C-terminal domains.

The protein localises to the cell inner membrane. Its function is as follows. Essential cell division protein that stabilizes the FtsZ protofilaments by cross-linking them and that serves as a cytoplasmic membrane anchor for the Z ring. Also required for the recruitment to the septal ring of downstream cell division proteins. In Pseudomonas syringae pv. syringae (strain B728a), this protein is Cell division protein ZipA.